A 182-amino-acid polypeptide reads, in one-letter code: Adenylate kinase (182 aa).

An ATP-binding site is contributed by 12–17 (GAGKGT). An NMP region spans residues 32–61 (STGDLLRAEVGAKTPLGQEAAAVMNRGELV). Residues T33, R38, 59–61 (ELV), 85–88 (GFPR), and Q92 each bind AMP. Positions 126–132 (SRGRSDD) are LID. R127 is a binding site for ATP. AMP is bound by residues R129 and R140. ATP is bound at residue G168.

This sequence belongs to the adenylate kinase family. Monomer.

It localises to the cytoplasm. The enzyme catalyses AMP + ATP = 2 ADP. Its pathway is purine metabolism; AMP biosynthesis via salvage pathway; AMP from ADP: step 1/1. Catalyzes the reversible transfer of the terminal phosphate group between ATP and AMP. Plays an important role in cellular energy homeostasis and in adenine nucleotide metabolism. The polypeptide is Adenylate kinase (Prochlorococcus marinus (strain MIT 9303)).